A 257-amino-acid polypeptide reads, in one-letter code: Pyridoxine 5'-phosphate synthase (257 aa).

A 3-amino-2-oxopropyl phosphate-binding site is contributed by Asn16. 18–19 contributes to the 1-deoxy-D-xylulose 5-phosphate binding site; that stretch reads DH. Residue Arg27 participates in 3-amino-2-oxopropyl phosphate binding. His52 acts as the Proton acceptor in catalysis. 2 residues coordinate 1-deoxy-D-xylulose 5-phosphate: Arg54 and His59. Glu79 functions as the Proton acceptor in the catalytic mechanism. Residue Thr109 participates in 1-deoxy-D-xylulose 5-phosphate binding. His200 functions as the Proton donor in the catalytic mechanism. 3-amino-2-oxopropyl phosphate is bound by residues Gly201 and 222 to 223; that span reads GH.

It belongs to the PNP synthase family. In terms of assembly, homooctamer; tetramer of dimers.

It is found in the cytoplasm. It carries out the reaction 3-amino-2-oxopropyl phosphate + 1-deoxy-D-xylulose 5-phosphate = pyridoxine 5'-phosphate + phosphate + 2 H2O + H(+). The protein operates within cofactor biosynthesis; pyridoxine 5'-phosphate biosynthesis; pyridoxine 5'-phosphate from D-erythrose 4-phosphate: step 5/5. Functionally, catalyzes the complicated ring closure reaction between the two acyclic compounds 1-deoxy-D-xylulose-5-phosphate (DXP) and 3-amino-2-oxopropyl phosphate (1-amino-acetone-3-phosphate or AAP) to form pyridoxine 5'-phosphate (PNP) and inorganic phosphate. This Burkholderia pseudomallei (strain K96243) protein is Pyridoxine 5'-phosphate synthase.